The sequence spans 522 residues: 2-isopropylmalate synthase (522 aa).

The Pyruvate carboxyltransferase domain maps to 5–267 (VIIFDTTLRD…ETGINAKEIH (263 aa)). Positions 14, 202, 204, and 238 each coordinate Mn(2+). Positions 392 to 522 (QLQQLVVQSD…MQKNRELGGV (131 aa)) are regulatory domain.

This sequence belongs to the alpha-IPM synthase/homocitrate synthase family. LeuA type 1 subfamily. Homodimer. Mn(2+) is required as a cofactor.

Its subcellular location is the cytoplasm. It carries out the reaction 3-methyl-2-oxobutanoate + acetyl-CoA + H2O = (2S)-2-isopropylmalate + CoA + H(+). It participates in amino-acid biosynthesis; L-leucine biosynthesis; L-leucine from 3-methyl-2-oxobutanoate: step 1/4. Functionally, catalyzes the condensation of the acetyl group of acetyl-CoA with 3-methyl-2-oxobutanoate (2-ketoisovalerate) to form 3-carboxy-3-hydroxy-4-methylpentanoate (2-isopropylmalate). This chain is 2-isopropylmalate synthase, found in Shewanella putrefaciens (strain CN-32 / ATCC BAA-453).